Reading from the N-terminus, the 452-residue chain is Argininosuccinate lyase (452 aa).

The segment at 431–452 (AFRKDSTGSTSPKWSFRAMRRA) is disordered.

It belongs to the lyase 1 family. Argininosuccinate lyase subfamily.

It localises to the cytoplasm. The catalysed reaction is 2-(N(omega)-L-arginino)succinate = fumarate + L-arginine. It functions in the pathway amino-acid biosynthesis; L-arginine biosynthesis; L-arginine from L-ornithine and carbamoyl phosphate: step 3/3. This Tremblaya princeps protein is Argininosuccinate lyase.